The chain runs to 297 residues: HTH-type transcriptional regulator ArgP (297 aa).

The HTH lysR-type domain occupies 4–60 (PDYRTLQALDAVIRERGFERAAQKLCITQSAVSQRIKQLENMFGQPLLVRTVPPRPT). Positions 21 to 40 (FERAAQKLCITQSAVSQRIK) form a DNA-binding region, H-T-H motif.

The protein belongs to the LysR transcriptional regulatory family. Homodimer.

Controls the transcription of genes involved in arginine and lysine metabolism. In Klebsiella pneumoniae subsp. pneumoniae (strain ATCC 700721 / MGH 78578), this protein is HTH-type transcriptional regulator ArgP.